The sequence spans 484 residues: MNGEEEFFDAVTGFDSDNSSIGEFSEANKISGMIDLDTSKSTRSGKNGEKPQQENGIQKHRTALPAPMFTRSDFSVWSILKKCIGLELSKITMPIAFNEPLSFLQRITEYMEHVYLIHKASSQSQPLERMQSVAAFAVSAVASQWERTGKPFNPLLGETYELIREDLGFRFISEQVSHHPPISAFYSEGLNQDFRFHGSIYPKLKFWGKSVEAEPRGTITLELLKHNEAYTWTNPTCCVHNVILGQLWIEQYGIVEIVNHRTGDKCILHFKPCGLFGKELHRVEGYIQDKNRKKLFIMYGKWTECLWGIDPASYESFKKQEKRGDQARKAKMDDGPEKANSDVPGDVADDVPVAQETVQVIPGSKLLWRINSRPPNSAQMYNFTSFTVSLNELESGMEKTLPPTDCRLRPDIRGMENGNMDLASQEKERLEEKQREARKERAKEDAEWRTRWFSPGNNPYTGAPDWLYAGHYFERNFSDCPDIY.

A phosphoserine mark is found at serine 19 and serine 20. The tract at residues 35 to 61 (DLDTSKSTRSGKNGEKPQQENGIQKHR) is disordered. A 1,2-diacyl-sn-glycero-3-phospho-(1D-myo-inositol-4,5-bisphosphate) contacts are provided by residues lysine 90 and 178–179 (HH). 2 stretches are compositionally biased toward basic and acidic residues: residues 319 to 340 (KQEK…EKAN) and 424 to 450 (SQEK…EWRT). Disordered stretches follow at residues 319-348 (KQEK…GDVA) and 423-454 (ASQE…RWFS). 431 to 435 (EEKQR) is an a 1,2-diacyl-sn-glycero-3-phospho-(1D-myo-inositol-4,5-bisphosphate) binding site.

Belongs to the OSBP family. In terms of assembly, monomer. Homotetramer; phosphatidylinositol-4,5-bisphosphate binding promotes formation of stable tetramers. Interacts with DIAPH1. As to expression, detected in cochlea, in inner and outer hair cells in the organ of Corti (at protein level).

It is found in the cytoplasm. Its subcellular location is the cytosol. The protein localises to the lipid droplet. The protein resides in the cell membrane. Its function is as follows. Intracellular transport protein that binds sterols and phospholipids and mediates lipid transport between intracellular compartments. Increases plasma membrane cholesterol levels and decreases phosphatidylinositol-4,5-bisphosphate levels in the cell membrane. Binds phosphoinositides, such as phosphatidylinositol-4,5-bisphosphate. Exhibits strong binding to phosphatidic acid and weak binding to phosphatidylinositol 3-phosphate. Binds cholesterol, dehydroergosterol, 22(R)-hydroxycholesterol and 25-hydroxycholesterol (in vitro). This is Oxysterol-binding protein-related protein 2 (Osbpl2) from Mus musculus (Mouse).